Consider the following 291-residue polypeptide: Short-chain dehydrogenase/reductase GME11359 (291 aa).

The NADP(+) site is built by L18, D67, N96, Y177, K181, and V209. The active-site Proton acceptor is the Y177. The active-site Lowers pKa of active site Tyr is the K181.

The protein belongs to the short-chain dehydrogenases/reductases (SDR) family.

It functions in the pathway secondary metabolite biosynthesis. Its function is as follows. Short-chain dehydrogenase/reductase; part of the gene cluster that mediates the biosynthesis of dibenzodioxocinones such as pestalotiollide B, a novel class of inhibitors against cholesterol ester transfer protein (CEPT). The biosynthesis initiates from condensation of acetate and malonate units catalyzed by the non-reducing PKS pks8/GME11356. Pks8/GME11356 lacks a thioesterase (TE) domain, which is important to the cyclizing of the third ring of atrochrysone carboxylic acid, and the esterase GME11355 might play the role of TE and catalyzes the cyclization reaction of the C ring. The lactamase-like protein GME11357 (or other beta-lactamases in Pestalotiopsis microspora) probably hydrolyzes the thioester bond between the ACP of pks8/GME11356 and the intermediate to release atrochrysone carboxylic acid, which is spontaneously dehydrates to form endocrocin anthrone. Endocrocin anthrone is further converted to emodin via the endocrocin intermediate. Emodin is then oxidized by several enzymes such as the Baeyer-Villiger oxidase GME11358, the oxidoreductase GME11367, the short chain dehydrogenase/reductase GME11373, as well as by other oxidoreductases from the cluster, to modify the A and C rings and open the B ring, and finally yield monodictyphenone. The prenyltransferase GME11375 may catalyze the addition reaction between the C5 side chains and the carbon bone of dibenzodioxocinones. The remaining biochemical reactions to the final product dibenzodioxocinones should be methylation catalyzed by methyltransferase GME11366 and reduction and lactonization reaction catalyzed by a series of oxidordeuctases. The protein is Short-chain dehydrogenase/reductase GME11359 of Pestalotiopsis microspora.